The sequence spans 311 residues: Hevamine-A (311 aa).

The N-terminal stretch at 1 to 26 (MAKRTQAILLLLLAISLIMSSSHVDG) is a signal peptide. The region spanning 27-302 (GGIAIYWGQN…SSILDSVLFL (276 aa)) is the GH18 domain. 2 disulfides stabilise this stretch: cysteine 46-cysteine 93 and cysteine 76-cysteine 83. Glutamate 153 functions as the Proton donor in the catalytic mechanism. A disulfide bridge links cysteine 185 with cysteine 214. Positions 300–311 (LFLHSEECMTVL) are cleaved as a propeptide — removed in mature form.

It belongs to the glycosyl hydrolase 18 family. Chitinase class II subfamily.

Its subcellular location is the vacuole. It catalyses the reaction Random endo-hydrolysis of N-acetyl-beta-D-glucosaminide (1-&gt;4)-beta-linkages in chitin and chitodextrins.. It carries out the reaction Hydrolysis of (1-&gt;4)-beta-linkages between N-acetylmuramic acid and N-acetyl-D-glucosamine residues in a peptidoglycan and between N-acetyl-D-glucosamine residues in chitodextrins.. In terms of biological role, bifunctional enzyme with lysozyme / chitinase activity. May have a role in plugging the latex vessel and cessation of latex flow. The polypeptide is Hevamine-A (Hevea brasiliensis (Para rubber tree)).